Reading from the N-terminus, the 238-residue chain is Ribonuclease 3 (238 aa).

An RNase III domain is found at 9-141; the sequence is LIDFMEKIGY…VVAAVYIDGG (133 aa). Glu54 contacts Mg(2+). Asp58 is a catalytic residue. Mg(2+) is bound by residues Asp127 and Glu130. Glu130 is an active-site residue. The region spanning 168-237 is the DRBM domain; that stretch reads DYKTSLQEIT…ARRAIEKLKG (70 aa).

The protein belongs to the ribonuclease III family. Homodimer. The cofactor is Mg(2+).

It is found in the cytoplasm. The catalysed reaction is Endonucleolytic cleavage to 5'-phosphomonoester.. Digests double-stranded RNA. Involved in the processing of primary rRNA transcript to yield the immediate precursors to the large and small rRNAs (23S and 16S). Processes some mRNAs, and tRNAs when they are encoded in the rRNA operon. Processes pre-crRNA and tracrRNA of type II CRISPR loci if present in the organism. The chain is Ribonuclease 3 from Pseudothermotoga lettingae (strain ATCC BAA-301 / DSM 14385 / NBRC 107922 / TMO) (Thermotoga lettingae).